We begin with the raw amino-acid sequence, 368 residues long: tRNA-cytidine(32) 2-sulfurtransferase (368 aa).

The short motif at 95-100 (SGGKDS) is the PP-loop motif element. Positions 170, 173, and 261 each coordinate [4Fe-4S] cluster.

The protein belongs to the TtcA family. As to quaternary structure, homodimer. Requires Mg(2+) as cofactor. It depends on [4Fe-4S] cluster as a cofactor.

It is found in the cytoplasm. The enzyme catalyses cytidine(32) in tRNA + S-sulfanyl-L-cysteinyl-[cysteine desulfurase] + AH2 + ATP = 2-thiocytidine(32) in tRNA + L-cysteinyl-[cysteine desulfurase] + A + AMP + diphosphate + H(+). The protein operates within tRNA modification. Its function is as follows. Catalyzes the ATP-dependent 2-thiolation of cytidine in position 32 of tRNA, to form 2-thiocytidine (s(2)C32). The sulfur atoms are provided by the cysteine/cysteine desulfurase (IscS) system. The polypeptide is tRNA-cytidine(32) 2-sulfurtransferase (Psychrobacter sp. (strain PRwf-1)).